A 152-amino-acid polypeptide reads, in one-letter code: Large ribosomal subunit protein bL9 (152 aa).

The protein belongs to the bacterial ribosomal protein bL9 family.

Binds to the 23S rRNA. In Synechococcus elongatus (strain ATCC 33912 / PCC 7942 / FACHB-805) (Anacystis nidulans R2), this protein is Large ribosomal subunit protein bL9.